The sequence spans 145 residues: 3-hydroxyacyl-[acyl-carrier-protein] dehydratase FabZ (145 aa).

The active site involves H51.

The protein belongs to the thioester dehydratase family. FabZ subfamily.

Its subcellular location is the cytoplasm. It carries out the reaction a (3R)-hydroxyacyl-[ACP] = a (2E)-enoyl-[ACP] + H2O. Its function is as follows. Involved in unsaturated fatty acids biosynthesis. Catalyzes the dehydration of short chain beta-hydroxyacyl-ACPs and long chain saturated and unsaturated beta-hydroxyacyl-ACPs. This chain is 3-hydroxyacyl-[acyl-carrier-protein] dehydratase FabZ, found in Staphylococcus saprophyticus subsp. saprophyticus (strain ATCC 15305 / DSM 20229 / NCIMB 8711 / NCTC 7292 / S-41).